A 254-amino-acid polypeptide reads, in one-letter code: Phosphoribosylaminoimidazole-succinocarboxamide synthase (254 aa).

The protein belongs to the SAICAR synthetase family.

The catalysed reaction is 5-amino-1-(5-phospho-D-ribosyl)imidazole-4-carboxylate + L-aspartate + ATP = (2S)-2-[5-amino-1-(5-phospho-beta-D-ribosyl)imidazole-4-carboxamido]succinate + ADP + phosphate + 2 H(+). The protein operates within purine metabolism; IMP biosynthesis via de novo pathway; 5-amino-1-(5-phospho-D-ribosyl)imidazole-4-carboxamide from 5-amino-1-(5-phospho-D-ribosyl)imidazole-4-carboxylate: step 1/2. This is Phosphoribosylaminoimidazole-succinocarboxamide synthase from Brucella anthropi (strain ATCC 49188 / DSM 6882 / CCUG 24695 / JCM 21032 / LMG 3331 / NBRC 15819 / NCTC 12168 / Alc 37) (Ochrobactrum anthropi).